The primary structure comprises 664 residues: Transketolase 1 (664 aa).

H26 serves as a coordination point for substrate. Thiamine diphosphate contacts are provided by residues H66 and 114-116; that span reads GPL. Residue D155 participates in Mg(2+) binding. 2 residues coordinate thiamine diphosphate: G156 and N185. Mg(2+)-binding residues include N185 and I187. 3 residues coordinate substrate: H260, R357, and S384. Residue H260 participates in thiamine diphosphate binding. The active-site Proton donor is the E411. Residue F437 participates in thiamine diphosphate binding. Substrate-binding residues include H461, D469, and R520.

Belongs to the transketolase family. Homodimer. Mg(2+) is required as a cofactor. It depends on Ca(2+) as a cofactor. Mn(2+) serves as cofactor. Requires Co(2+) as cofactor. The cofactor is thiamine diphosphate.

The catalysed reaction is D-sedoheptulose 7-phosphate + D-glyceraldehyde 3-phosphate = aldehydo-D-ribose 5-phosphate + D-xylulose 5-phosphate. Catalyzes the transfer of a two-carbon ketol group from a ketose donor to an aldose acceptor, via a covalent intermediate with the cofactor thiamine pyrophosphate. The polypeptide is Transketolase 1 (tkt1) (Aliivibrio fischeri (strain ATCC 700601 / ES114) (Vibrio fischeri)).